The primary structure comprises 469 residues: Glutamate--tRNA ligase (469 aa).

Residues 9–19 carry the 'HIGH' region motif; sequence PSPTGFLHVGG. Zn(2+)-binding residues include C98, C100, C125, and D127. The 'KMSKS' region signature appears at 236–240; the sequence is KLSKR. K239 lines the ATP pocket.

The protein belongs to the class-I aminoacyl-tRNA synthetase family. Glutamate--tRNA ligase type 1 subfamily. As to quaternary structure, monomer. Requires Zn(2+) as cofactor.

The protein resides in the cytoplasm. It catalyses the reaction tRNA(Glu) + L-glutamate + ATP = L-glutamyl-tRNA(Glu) + AMP + diphosphate. Catalyzes the attachment of glutamate to tRNA(Glu) in a two-step reaction: glutamate is first activated by ATP to form Glu-AMP and then transferred to the acceptor end of tRNA(Glu). This is Glutamate--tRNA ligase from Shewanella baltica (strain OS155 / ATCC BAA-1091).